Reading from the N-terminus, the 208-residue chain is Orotidine 5'-phosphate decarboxylase (208 aa).

Residues D7, K29, 57 to 66 (DLKLADIPNT), S109, 162 to 172 (PGIGAQGGKAK), G185, and R186 each bind substrate. Catalysis depends on K59, which acts as the Proton donor.

This sequence belongs to the OMP decarboxylase family. Type 1 subfamily. As to quaternary structure, homodimer.

It catalyses the reaction orotidine 5'-phosphate + H(+) = UMP + CO2. It participates in pyrimidine metabolism; UMP biosynthesis via de novo pathway; UMP from orotate: step 2/2. Functionally, catalyzes the decarboxylation of orotidine 5'-monophosphate (OMP) to uridine 5'-monophosphate (UMP). The protein is Orotidine 5'-phosphate decarboxylase (pyrF) of Pyrococcus horikoshii (strain ATCC 700860 / DSM 12428 / JCM 9974 / NBRC 100139 / OT-3).